Here is a 209-residue protein sequence, read N- to C-terminus: Protein Bel-1 (209 aa).

Disordered regions lie at residues 1 to 30 (MASK…LDLT), 123 to 143 (FLNS…PATS), and 156 to 185 (CSRP…GESG). Polar residues-rich tracts occupy residues 21-30 (SHSTSGLDLT) and 132-143 (TPKTDPTRPATS).

Functionally, transcriptional transactivator that activates the viral internal promoter (IP), thereby enhancing its own expression. This transactivation is repressed by nuclear factor I. Also transactivates the long terminal repeat (LTR) promoter, thereby inducing structural gene expression, initiating the late phase of infection. It is therefore a key regulator of viral gene expression. It directly binds to and activates DNA target sites of viral promoters and those of distinct cellular genes. Required for viral replication. The protein is Protein Bel-1 (bel1) of Felis catus (Cat).